Reading from the N-terminus, the 1770-residue chain is MESQQLHQNPHSLHGSAYASVTSKEVPSNQDPLAVSASNLPEFDRDSTKVNSQQETTPGTSAVPENHHHVSPQPASVPPPQNGQYQQHGMMTPNKAMASNWAHYQQPSMMTCSHYQTSPAYYQPDPHYPLPQYIPPLSTSSPDPIDLKNQHSEIPQAKTKVGNNVLPPHTLTSEENFSTWVKFYIRFLKNSNLGDIIPNDQGEIKRQMTYEEHAYIYNTFQAFAPFHLLPTWVKQILEINYADILTVLCKSVSKMQTNNQELKDWIALANLEYDGSTSADTFEITVSTIIQRLKENNINVSDRLACQLILKGLSGDFKYLRNQYRTKTNMKLSQLFAEIQLIYDENKIMNLNKPSQYKQHSEYKNVSRTSPNTTNTKVTTRNYHRTNSSKPRAAKAHNIATSSKFSRVNNDHINESTVSSQYLSDDNELSLGQQQKESKPTHTIDSNDELPDHLLIDSGASQTLVRSAHYLHHATPNSEINIVDAQKQDIPINAIGNLHFNFQNGTKTSIKALHTPNIAYDLLSLSELANQNITACFTRNTLERSDGTVLAPIVKHGDFYWLSKKYLIPSHISKLTINNVNKSKSVNKYPYPLIHRMLGHANFRSIQKSLKKNAVTYLKESDIEWSNASTYQCPDCLIGKSTKHRHVKGSRLKYQESYEPFQYLHTDIFGPVHHLPKSAPSYFISFTDEKTRFQWVYPLHDRREESILNVFTSILAFIKNQFNARVLVIQMDRGSEYTNKTLHKFFTNRGITACYTTTADSRAHGVAERLNRTLLNDCRTLLHCSGLPNHLWFSAVEFSTIIRNSLVSPKNDKSARQHAGLAGLDITTILPFGQPVIVNNHNPDSKIHPRGIPGYALHPSRNSYGYIIYLPSLKKTVDTTNYVILQDNQSKLDQFNYDTLTFDDDLNRLTAHNQSFIEQNETEQSYDQNTESDHDYQSEIEINSDPLVNDFSSQSMNPLQLDHEPVQKVRAPKEVDADISEYNILPSPVRSRTPHIINKESTEMGGTIESDTTSPRHSSTFTARNQKRPGSPNDMIDLTSQDRVNYGLENIKTTRLGGTEEPYIQRNSDTNIKYRTTNSTPSIDDRSSNSESTTPIISIETKAVCDNTPSIDTDPPEYRSSDHATPNIMPDKSSKNVTADSILDDLPLPDLTHKSPTDTSDVSKDIPHIHSRQTNSSLGGMDDSNVLTTTKSKKRSLEDNETEIEVSRDTWNNKNMRSLEPPRSKKRINLIAAIKGVKSIKPVRTTLRYDEAITYNKDNKEKDRYVEAYHKEISQLLKMNTWDTNKYYDRNDIDPKKVINSMFIFNKKRDGTHKARFVARGDIQHPDTYDSDMQSNTVHHYALMTSLSIALDNDYYITQLDISSAYLYADIKEELYIRPPPHLGLNDKLLRLRKSLYGLKQSGANWYETIKSYLINCCDMQEVRGWSCVFKNSQVTICLFVDDMILFSKDLNANKKIITTLKKQYDTKIINLGERDNEIQYDILGLEIKYQRSKYMKLGMEKSLTEKLPKLNVPLNPKGKKLRAPGQPGHYIDQDELEIDEDEYKEKVHEMQKLIGLASYVGYKFRFDLLYYINTLAQHILFPSRQVLDMTYELIQFMWDTRDKQLIWHKNKPTKPDNKLVAISDASYGNQPYYKSQIGNIFLLNGKVIGGKSTKASLTCTSTTEAEIHAVSEAIPLLNNLSHLVQELNKKPIIKGLLTDSRSTISIIKSTNEEKFRNRFFGTKAMRLRDEVSGNNLYVYYIETKKNIADVMTKPLPIKTFKLLTNKWIH.

3 stretches are compositionally biased toward polar residues: residues 1–11, 19–39, and 49–60; these read MESQQLHQNPH, ASVT…SASN, and KVNSQQETTPGT. Disordered stretches follow at residues 1-86 and 359-453; these read MESQ…GQYQ and QHSE…LPDH. Residues 295-397 are RNA-binding; sequence ENNINVSDRL…SSKPRAAKAH (103 aa). Low complexity predominate over residues 369 to 381; the sequence is TSPNTTNTKVTTR. Polar residues-rich tracts occupy residues 399-408 and 415-435; these read IATSSKFSRV and ESTV…GQQQ. The active-site For protease activity; shared with dimeric partner is Asp-457. The interval 579-636 is integrase-type zinc finger-like; the sequence is NVNKSKSVNKYPYPLIHRMLGHANFRSIQKSLKKNAVTYLKESDIEWSNASTYQCPDC. An Integrase catalytic domain is found at 656–831; that stretch reads ESYEPFQYLH…AGLDITTILP (176 aa). 2 residues coordinate Mg(2+): Asp-667 and Asp-732. 4 disordered regions span residues 1005-1038, 1058-1135, 1146-1165, and 1170-1205; these read GGTI…MIDL, GTEE…KSSK, LPLP…VSKD, and HSRQ…TEIE. Composition is skewed to polar residues over residues 1009–1024 and 1065–1082; these read ESDT…FTAR and QRNS…STPS. Basic and acidic residues predominate over residues 1151–1165; that stretch reads LTHKSPTDTSDVSKD. Positions 1193-1227 match the Bipartite nuclear localization signal motif; the sequence is KKRSLEDNETEIEVSRDTWNNKNMRSLEPPRSKKR. Positions 1353–1491 constitute a Reverse transcriptase Ty1/copia-type domain; it reads NDYYITQLDI…DILGLEIKYQ (139 aa). Positions 1361, 1442, 1443, 1625, 1667, and 1700 each coordinate Mg(2+). Positions 1625–1767 constitute an RNase H Ty1/copia-type domain; it reads DASYGNQPYY…IKTFKLLTNK (143 aa).

The capsid protein forms a homotrimer, from which the VLPs are assembled. The protease is a homodimer, whose active site consists of two apposed aspartic acid residues. Initially, virus-like particles (VLPs) are composed of the structural unprocessed proteins Gag and Gag-Pol, and also contain the host initiator methionine tRNA (tRNA(i)-Met) which serves as a primer for minus-strand DNA synthesis, and a dimer of genomic Ty RNA. Processing of the polyproteins occurs within the particle and proceeds by an ordered pathway, called maturation. First, the protease (PR) is released by autocatalytic cleavage of the Gag-Pol polyprotein, and this cleavage is a prerequisite for subsequent processing at the remaining sites to release the mature structural and catalytic proteins. Maturation takes place prior to the RT reaction and is required to produce transposition-competent VLPs.

Its subcellular location is the cytoplasm. It localises to the nucleus. It catalyses the reaction DNA(n) + a 2'-deoxyribonucleoside 5'-triphosphate = DNA(n+1) + diphosphate. The catalysed reaction is Endonucleolytic cleavage to 5'-phosphomonoester.. Its function is as follows. Capsid protein (CA) is the structural component of the virus-like particle (VLP), forming the shell that encapsulates the retrotransposons dimeric RNA genome. The particles are assembled from trimer-clustered units and there are holes in the capsid shells that allow for the diffusion of macromolecules. CA also has nucleocapsid-like chaperone activity, promoting primer tRNA(i)-Met annealing to the multipartite primer-binding site (PBS), dimerization of Ty2 RNA and initiation of reverse transcription. The aspartyl protease (PR) mediates the proteolytic cleavages of the Gag and Gag-Pol polyproteins after assembly of the VLP. Functionally, reverse transcriptase/ribonuclease H (RT) is a multifunctional enzyme that catalyzes the conversion of the retro-elements RNA genome into dsDNA within the VLP. The enzyme displays a DNA polymerase activity that can copy either DNA or RNA templates, and a ribonuclease H (RNase H) activity that cleaves the RNA strand of RNA-DNA heteroduplexes during plus-strand synthesis and hydrolyzes RNA primers. The conversion leads to a linear dsDNA copy of the retrotransposon that includes long terminal repeats (LTRs) at both ends. In terms of biological role, integrase (IN) targets the VLP to the nucleus, where a subparticle preintegration complex (PIC) containing at least integrase and the newly synthesized dsDNA copy of the retrotransposon must transit the nuclear membrane. Once in the nucleus, integrase performs the integration of the dsDNA into the host genome. This chain is Transposon Ty2-LR1 Gag-Pol polyprotein (TY2B-LR1), found in Saccharomyces cerevisiae (strain ATCC 204508 / S288c) (Baker's yeast).